Here is a 644-residue protein sequence, read N- to C-terminus: Acetyl-coenzyme A synthetase 2 (644 aa).

CoA is bound by residues 189 to 192 (RGGK), T307, and N331. ATP-binding positions include 383–385 (GEP), 407–412 (DTWWQT), D496, and R511. S519 contacts CoA. Residue R522 participates in ATP binding. Residues V533, H535, and V538 each contribute to the Mg(2+) site. K605 bears the N6-acetyllysine mark.

It belongs to the ATP-dependent AMP-binding enzyme family. Mg(2+) serves as cofactor. In terms of processing, acetylated. Deacetylation by the SIR2-homolog deacetylase activates the enzyme.

It catalyses the reaction acetate + ATP + CoA = acetyl-CoA + AMP + diphosphate. Its function is as follows. Catalyzes the conversion of acetate into acetyl-CoA (AcCoA), an essential intermediate at the junction of anabolic and catabolic pathways. AcsA undergoes a two-step reaction. In the first half reaction, AcsA combines acetate with ATP to form acetyl-adenylate (AcAMP) intermediate. In the second half reaction, it can then transfer the acetyl group from AcAMP to the sulfhydryl group of CoA, forming the product AcCoA. This Pseudomonas putida (strain ATCC 47054 / DSM 6125 / CFBP 8728 / NCIMB 11950 / KT2440) protein is Acetyl-coenzyme A synthetase 2.